The following is a 350-amino-acid chain: DNA-directed RNA polymerase subunit alpha (350 aa).

The interval Met1–Asn226 is alpha N-terminal domain (alpha-NTD). The segment at Ala241–Leu350 is alpha C-terminal domain (alpha-CTD). The tract at residues Ala326–Leu350 is disordered. Over residues Tyr336–Leu350 the composition is skewed to acidic residues.

Belongs to the RNA polymerase alpha chain family. Homodimer. The RNAP catalytic core consists of 2 alpha, 1 beta, 1 beta' and 1 omega subunit. When a sigma factor is associated with the core the holoenzyme is formed, which can initiate transcription.

It catalyses the reaction RNA(n) + a ribonucleoside 5'-triphosphate = RNA(n+1) + diphosphate. DNA-dependent RNA polymerase catalyzes the transcription of DNA into RNA using the four ribonucleoside triphosphates as substrates. The chain is DNA-directed RNA polymerase subunit alpha from Mycobacterium sp. (strain JLS).